Consider the following 1834-residue polypeptide: Non-reducing polyketide synthase spyA (1834 aa).

One can recognise a Starter acyltransferase (SAT) domain in the interval 91–255 (LAPLTVIIHL…TRIPIYGRYH (165 aa)). The region spanning 385 to 801 (EHSIAVIGAA…GNNTAVIVCE (417 aa)) is the Ketosynthase family 3 (KS3) domain. Residues C551, H687, and H724 each act as for beta-ketoacyl synthase activity in the active site. Residues 919–1164 (YEGSSLLRSH…KELGPCTWVE (246 aa)) form the Malonyl-CoA:ACP transacylase (MAT) domain. The interval 1269-1398 (PLVYLLRDEG…GVISLRQERH (130 aa)) is N-terminal hotdog fold. In terms of domain architecture, PKS/mFAS DH spans 1269–1577 (PLVYLLRDEG…FVRITASSLN (309 aa)). Residues 1269 to 1577 (PLVYLLRDEG…FVRITASSLN (309 aa)) form a product template (PT) domain region. Residues 1428 to 1577 (AISLKEGIIY…FVRITASSLN (150 aa)) are C-terminal hotdog fold. The region spanning 1616–1690 (SDILSILSHL…TLCQEIQTQR (75 aa)) is the Carrier 1 domain. S1650 is modified (O-(pantetheine 4'-phosphoryl)serine). The interval 1693-1720 (RLARASRTTTATRNTSFSLGRRTSSTES) is disordered. Over residues 1697–1710 (ASRTTTATRNTSFS) the composition is skewed to low complexity. One can recognise a Carrier 2 domain in the interval 1731–1807 (SKSAAVLAQL…GLARLILASE (77 aa)). S1767 is subject to O-(pantetheine 4'-phosphoryl)serine.

Pantetheine 4'-phosphate is required as a cofactor.

It carries out the reaction 2 malonyl-CoA + acetyl-CoA + 2 H(+) = triacetate lactone + 2 CO2 + 3 CoA. The protein operates within secondary metabolite biosynthesis; terpenoid biosynthesis. In terms of biological role, non-reducing polyketide synthase; part of the gene cluster that mediates the biosynthesis of meroterpenoids called sartorypyrones. The biosynthesis of sartorypyrones begins with the production of triacetic acid lactone (TAL) by the NR-PKS spyA using one molecule of acetyl-CoA and two molecules of malonyl-CoA. As spyA lacks a thioesterase (TE) domain, TAL is likely generated through self-release from spyA by spontaneous lactonization. After production of TAL, the prenyltransferase spyF then conjugates geranylgeranyl pyrophosphate (GGPP) to TAL to form geranylgeranyl-triacetate lactone, for which the pathway-specific geranylgeranyl pyrophosphate synthase (GGPS) spyE is required to provide GGPP. Subsequently, geranylgeranyl-triacetate lactone is epoxidized at the terminal olein by the FAD-dependent monooxygenase spyC, followed by cyclization of the terpenoid component catalyzed by the terpene cyclase spyD to produce both the bicyclic sartorypyrone F and the monocyclic sartorypyrone D. Finally, the last step of the biosynthesis involves the acetylation of the meroterpenoids sartorypyrones D and F by the acetyltransferase SpyB to produce sartorypyrones A and G, respectively. The polypeptide is Non-reducing polyketide synthase spyA (Aspergillus fumigatus (strain ATCC MYA-4609 / CBS 101355 / FGSC A1100 / Af293) (Neosartorya fumigata)).